Consider the following 485-residue polypeptide: Bindin (485 aa).

An N-terminal signal peptide occupies residues 1 to 20; sequence MGFHQISVIIVVLALASARA. Residues 21–247 constitute a propeptide that is removed on maturation; it reads ADEFPSHTDT…DSERGARKKR (227 aa). 3 disordered regions span residues 157-195, 219-273, and 305-331; these read GETR…DLAP, ISGH…PAQQ, and GGGQ…SDSL. Residues 172–192 show a composition bias toward basic and acidic residues; that stretch reads DVSKRASPRKGDEPAGHKLKD. Residues 250–264 show a composition bias toward polar residues; it reads NQGNYPQAMNPQSRG. Positions 317 to 331 are enriched in acidic residues; the sequence is AEADNADYDEYSDSL. The tract at residues 371–379 is fucose-binding domain; sequence LRHLRHHSN. The segment at 459 to 485 is disordered; sequence QQGMGGVPQRMGGQPQGNAYNQGYRQG. The span at 465-475 shows a compositional bias: low complexity; sequence VPQRMGGQPQG. A compositionally biased stretch (polar residues) spans 476 to 485; sequence NAYNQGYRQG.

Belongs to the bindin family.

Its subcellular location is the cytoplasmic vesicle. It localises to the secretory vesicle. It is found in the acrosome lumen. Species-specific sea urchin sperm protein required for adhesion of sperm to the egg surface during fertilization. Bindin coats the acrosomal process after it is externalized by the acrosome reaction. It binds to sulfated, fucose-containing polysaccharides on the vitelline layer receptor proteoglycans which cover the egg plasma membrane. The polypeptide is Bindin (Mesocentrotus franciscanus (Giant red sea urchin)).